The following is a 147-amino-acid chain: Hemoglobin subunit delta (147 aa).

The Globin domain occupies 3–147 (HLTGEEKAAV…VANALAHKYH (145 aa)). The heme b site is built by His64 and His93.

This sequence belongs to the globin family. Heterotetramer of two delta chains and two alpha chains. In terms of tissue distribution, red blood cells.

The polypeptide is Hemoglobin subunit delta (HBD) (Ailuropoda melanoleuca (Giant panda)).